The primary structure comprises 141 residues: Hemoglobin subunit alpha-2 (141 aa).

A Globin domain is found at 1-141 (VLTDAERKEV…VATVLTSKYR (141 aa)). His58 lines the O2 pocket. His87 is a heme b binding site.

The protein belongs to the globin family. In terms of assembly, heterotetramer of two alpha chains and two beta chains. As to expression, red blood cells.

Its function is as follows. Involved in oxygen transport from the lung to the various peripheral tissues. This Tachyglossus aculeatus aculeatus (Southeast Australian short-beaked echidna) protein is Hemoglobin subunit alpha-2.